Consider the following 244-residue polypeptide: Orotidine 5'-phosphate decarboxylase (244 aa).

Substrate-binding positions include Asp-10, Lys-32, 59–68 (DLKLHDIPNT), Thr-122, Arg-184, Gln-193, Gly-213, and Arg-214. Residue Lys-61 is the Proton donor of the active site.

This sequence belongs to the OMP decarboxylase family. Type 1 subfamily. Homodimer.

It catalyses the reaction orotidine 5'-phosphate + H(+) = UMP + CO2. It functions in the pathway pyrimidine metabolism; UMP biosynthesis via de novo pathway; UMP from orotate: step 2/2. In terms of biological role, catalyzes the decarboxylation of orotidine 5'-monophosphate (OMP) to uridine 5'-monophosphate (UMP). This Geobacillus kaustophilus (strain HTA426) protein is Orotidine 5'-phosphate decarboxylase.